The sequence spans 736 residues: Phosphoribosylformylglycinamidine synthase subunit PurL (736 aa).

Residue His50 is part of the active site. Residues Tyr53 and Lys92 each contribute to the ATP site. Glu94 is a binding site for Mg(2+). Residues 95-98 and Arg117 contribute to the substrate site; that span reads SHNH. His96 functions as the Proton acceptor in the catalytic mechanism. Asp118 contributes to the Mg(2+) binding site. Gln241 contacts substrate. Position 269 (Asp269) interacts with Mg(2+). 313-315 provides a ligand contact to substrate; that stretch reads ESQ. ATP is bound by residues Asp495 and Gly532. Asn533 is a binding site for Mg(2+). Residue Ser535 coordinates substrate.

The protein belongs to the FGAMS family. In terms of assembly, monomer. Part of the FGAM synthase complex composed of 1 PurL, 1 PurQ and 2 PurS subunits.

The protein resides in the cytoplasm. It carries out the reaction N(2)-formyl-N(1)-(5-phospho-beta-D-ribosyl)glycinamide + L-glutamine + ATP + H2O = 2-formamido-N(1)-(5-O-phospho-beta-D-ribosyl)acetamidine + L-glutamate + ADP + phosphate + H(+). It functions in the pathway purine metabolism; IMP biosynthesis via de novo pathway; 5-amino-1-(5-phospho-D-ribosyl)imidazole from N(2)-formyl-N(1)-(5-phospho-D-ribosyl)glycinamide: step 1/2. Its function is as follows. Part of the phosphoribosylformylglycinamidine synthase complex involved in the purines biosynthetic pathway. Catalyzes the ATP-dependent conversion of formylglycinamide ribonucleotide (FGAR) and glutamine to yield formylglycinamidine ribonucleotide (FGAM) and glutamate. The FGAM synthase complex is composed of three subunits. PurQ produces an ammonia molecule by converting glutamine to glutamate. PurL transfers the ammonia molecule to FGAR to form FGAM in an ATP-dependent manner. PurS interacts with PurQ and PurL and is thought to assist in the transfer of the ammonia molecule from PurQ to PurL. The chain is Phosphoribosylformylglycinamidine synthase subunit PurL from Bartonella quintana (strain Toulouse) (Rochalimaea quintana).